Here is a 187-residue protein sequence, read N- to C-terminus: Elongation factor P (187 aa).

This sequence belongs to the elongation factor P family.

Its subcellular location is the cytoplasm. It participates in protein biosynthesis; polypeptide chain elongation. Functionally, involved in peptide bond synthesis. Stimulates efficient translation and peptide-bond synthesis on native or reconstituted 70S ribosomes in vitro. Probably functions indirectly by altering the affinity of the ribosome for aminoacyl-tRNA, thus increasing their reactivity as acceptors for peptidyl transferase. This is Elongation factor P from Syntrophus aciditrophicus (strain SB).